Reading from the N-terminus, the 165-residue chain is Protein SprT (165 aa).

In terms of domain architecture, SprT-like spans 22–163 (LAQANLKLDR…RCVHCGEPLV (142 aa)). Histidine 78 contacts Zn(2+). Glutamate 79 is a catalytic residue. Residue histidine 82 coordinates Zn(2+).

This sequence belongs to the SprT family. Requires Zn(2+) as cofactor.

It is found in the cytoplasm. The sequence is that of Protein SprT from Salmonella paratyphi C (strain RKS4594).